The chain runs to 110 residues: Large ribosomal subunit protein uL22 (110 aa).

This sequence belongs to the universal ribosomal protein uL22 family. Part of the 50S ribosomal subunit.

Its function is as follows. This protein binds specifically to 23S rRNA; its binding is stimulated by other ribosomal proteins, e.g. L4, L17, and L20. It is important during the early stages of 50S assembly. It makes multiple contacts with different domains of the 23S rRNA in the assembled 50S subunit and ribosome. The globular domain of the protein is located near the polypeptide exit tunnel on the outside of the subunit, while an extended beta-hairpin is found that lines the wall of the exit tunnel in the center of the 70S ribosome. The sequence is that of Large ribosomal subunit protein uL22 from Bdellovibrio bacteriovorus (strain ATCC 15356 / DSM 50701 / NCIMB 9529 / HD100).